The primary structure comprises 321 residues: Fe-S cluster assembly protein DRE2 (321 aa).

The segment at 1 to 131 is N-terminal SAM-like domain; sequence MERMLLLSPP…KPDFGPENIV (131 aa). The interval 132–213 is linker; it reads PLKLGKRKPV…EETLLDGEDM (82 aa). Residues C223, C234, C237, and C239 each contribute to the [2Fe-2S] cluster site. The interval 223–239 is fe-S binding site A; it reads CRPKAGKRRRACKDCTC. [4Fe-4S] cluster-binding residues include C284, C287, C295, and C298. 2 short sequence motifs (cx2C motif) span residues 284-287 and 295-298; these read CGNC and CDGC. A fe-S binding site B region spans residues 284-298; it reads CGNCALGDAFRCDGC.

The protein belongs to the anamorsin family. As to quaternary structure, monomer. Interacts with TAH18. Interacts with MIA40. The cofactor is [2Fe-2S] cluster. It depends on [4Fe-4S] cluster as a cofactor.

It localises to the cytoplasm. The protein localises to the mitochondrion intermembrane space. Component of the cytosolic iron-sulfur (Fe-S) protein assembly (CIA) machinery required for the maturation of extramitochondrial Fe-S proteins. Part of an electron transfer chain functioning in an early step of cytosolic Fe-S biogenesis, facilitating the de novo assembly of a [4Fe-4S] cluster on the scaffold complex CFD1-NBP35. Electrons are transferred to DRE2 from NADPH via the FAD- and FMN-containing protein TAH18. TAH18-DRE2 are also required for the assembly of the diferric tyrosyl radical cofactor of ribonucleotide reductase (RNR), probably by providing electrons for reduction during radical cofactor maturation in the catalytic small subunit RNR2. This chain is Fe-S cluster assembly protein DRE2, found in Coccidioides posadasii (strain C735) (Valley fever fungus).